A 140-amino-acid polypeptide reads, in one-letter code: Large ribosomal subunit protein uL14 (140 aa).

The protein belongs to the universal ribosomal protein uL14 family. In terms of assembly, part of the 50S ribosomal subunit. Forms a cluster with proteins L3 and L24e, part of which may contact the 16S rRNA in 2 intersubunit bridges.

Its function is as follows. Binds to 23S rRNA. Forms part of two intersubunit bridges in the 70S ribosome. The chain is Large ribosomal subunit protein uL14 from Nitrosopumilus maritimus (strain SCM1).